The following is a 154-amino-acid chain: Large ribosomal subunit protein uL13 (154 aa).

It belongs to the universal ribosomal protein uL13 family. As to quaternary structure, part of the 50S ribosomal subunit.

Its function is as follows. This protein is one of the early assembly proteins of the 50S ribosomal subunit, although it is not seen to bind rRNA by itself. It is important during the early stages of 50S assembly. This is Large ribosomal subunit protein uL13 from Cereibacter sphaeroides (strain ATCC 17025 / ATH 2.4.3) (Rhodobacter sphaeroides).